Reading from the N-terminus, the 84-residue chain is Small ribosomal subunit protein bS16 (84 aa).

The protein belongs to the bacterial ribosomal protein bS16 family.

This Paraburkholderia phymatum (strain DSM 17167 / CIP 108236 / LMG 21445 / STM815) (Burkholderia phymatum) protein is Small ribosomal subunit protein bS16.